We begin with the raw amino-acid sequence, 407 residues long: Mitochondrial protein import protein mas5 (407 aa).

One can recognise a J domain in the interval 6-68 (KLYEVLNVDV…EKRATYDRFG (63 aa)). Residues Leu-110 and 129–131 (LAL) contribute to the substrate site. A CR-type zinc finger spans residues 124–207 (GKTTKLALQK…CDGAKVISQR (84 aa)). Residues Cys-137, Cys-140, Cys-153, Cys-156, Cys-179, Cys-182, Cys-195, and Cys-198 each coordinate Zn(2+). CXXCXGXG motif repeat units follow at residues 137–144 (CPKCSGRG), 153–160 (CASCNGSG), 179–186 (CPDCNGAG), and 195–202 (CKECDGAK). Substrate contacts are provided by residues 209 to 210 (IL) and 241 to 243 (VIF). The tract at residues 375 to 407 (VRIDNNVDPTTATSMDEDEDEEGGHPGVQCAQQ) is disordered. A Cysteine methyl ester modification is found at Cys-404. Cys-404 carries S-farnesyl cysteine lipidation. Residues 405–407 (AQQ) constitute a propeptide, removed in mature form.

As to quaternary structure, homodimer.

It localises to the cytoplasm. The protein localises to the nucleus. In terms of biological role, probably involved in mitochondrial protein import. Plays a role in microtubule cytoskeleton organization. The polypeptide is Mitochondrial protein import protein mas5 (mas5) (Schizosaccharomyces pombe (strain 972 / ATCC 24843) (Fission yeast)).